A 48-amino-acid polypeptide reads, in one-letter code: Cytochrome b559 subunit beta (48 aa).

A helical membrane pass occupies residues 23 to 39 (WLAVHALAIPSVFFLGS). His27 is a heme binding site.

It belongs to the PsbE/PsbF family. Heterodimer of an alpha subunit and a beta subunit. PSII is composed of 1 copy each of membrane proteins PsbA, PsbB, PsbC, PsbD, PsbE, PsbF, PsbH, PsbI, PsbJ, PsbK, PsbL, PsbM, PsbT, PsbX, PsbY, Psb30/Ycf12, peripheral proteins PsbO, CyanoQ (PsbQ), PsbU, PsbV and a large number of cofactors. It forms dimeric complexes. Heme b serves as cofactor.

The protein resides in the cellular thylakoid membrane. Functionally, this b-type cytochrome is tightly associated with the reaction center of photosystem II (PSII). PSII is a light-driven water:plastoquinone oxidoreductase that uses light energy to abstract electrons from H(2)O, generating O(2) and a proton gradient subsequently used for ATP formation. It consists of a core antenna complex that captures photons, and an electron transfer chain that converts photonic excitation into a charge separation. This chain is Cytochrome b559 subunit beta, found in Prochlorococcus marinus (strain MIT 9301).